We begin with the raw amino-acid sequence, 693 residues long: Phosphoribosylformylglycinamidine synthase subunit PurL (693 aa).

Residue H34 is part of the active site. Residues Y37 and K76 each coordinate ATP. E78 is a binding site for Mg(2+). Substrate-binding positions include 79–82 and R101; that span reads SHNH. The active-site Proton acceptor is the H80. D102 serves as a coordination point for Mg(2+). Q222 contributes to the substrate binding site. D248 serves as a coordination point for Mg(2+). A substrate-binding site is contributed by 292-294; that stretch reads ETQ. ATP is bound by residues D470 and G507. S510 serves as a coordination point for substrate.

It belongs to the FGAMS family. In terms of assembly, monomer. Part of the FGAM synthase complex composed of 1 PurL, 1 PurQ and 2 PurS subunits.

The protein resides in the cytoplasm. The enzyme catalyses N(2)-formyl-N(1)-(5-phospho-beta-D-ribosyl)glycinamide + L-glutamine + ATP + H2O = 2-formamido-N(1)-(5-O-phospho-beta-D-ribosyl)acetamidine + L-glutamate + ADP + phosphate + H(+). It participates in purine metabolism; IMP biosynthesis via de novo pathway; 5-amino-1-(5-phospho-D-ribosyl)imidazole from N(2)-formyl-N(1)-(5-phospho-D-ribosyl)glycinamide: step 1/2. Functionally, part of the phosphoribosylformylglycinamidine synthase complex involved in the purines biosynthetic pathway. Catalyzes the ATP-dependent conversion of formylglycinamide ribonucleotide (FGAR) and glutamine to yield formylglycinamidine ribonucleotide (FGAM) and glutamate. The FGAM synthase complex is composed of three subunits. PurQ produces an ammonia molecule by converting glutamine to glutamate. PurL transfers the ammonia molecule to FGAR to form FGAM in an ATP-dependent manner. PurS interacts with PurQ and PurL and is thought to assist in the transfer of the ammonia molecule from PurQ to PurL. This chain is Phosphoribosylformylglycinamidine synthase subunit PurL, found in Pyrobaculum islandicum (strain DSM 4184 / JCM 9189 / GEO3).